The following is a 453-amino-acid chain: Keratin, type I cytoskeletal 15 (453 aa).

Residues 1-102 are head; that stretch reads MATTLLQTSS…GGDGGLLSGN (102 aa). Residues S16, S17, S34, S48, and S56 each carry the phosphoserine modification. The segment at 103 to 138 is coil 1A; the sequence is EKITMQNLNDRLASYLEKVRALEEANADLEVKIRDW. The IF rod domain maps to 103–415; sequence EKITMQNLND…SLLEGQDARM (313 aa). Positions 139–157 are linker 1; sequence YQRQSPTSPERDYSPYFKT. Residues 158 to 249 form a coil 1B region; sequence TDELRDKILA…KNHEEEMKEF (92 aa). The linker 12 stretch occupies residues 250–269; it reads SNQLAGQVNVEMDAAPGVDL. The segment at 270–411 is coil 2; that stretch reads TRVLSEMREQ…ATYHSLLEGQ (142 aa). A Glycyl lysine isopeptide (Lys-Gly) (interchain with G-Cter in SUMO2) cross-link involves residue K298. A phosphothreonine mark is found at T299 and T321. Positions 412-453 are tail; sequence DARMAGIGTGEASLGGGGGGKVRINVEESVDGKVVSSRKREI. K444 participates in a covalent cross-link: Glycyl lysine isopeptide (Lys-Gly) (interchain with G-Cter in SUMO1); alternate. A Glycyl lysine isopeptide (Lys-Gly) (interchain with G-Cter in SUMO2); alternate cross-link involves residue K444.

This sequence belongs to the intermediate filament family. Heterotetramer of two type I and two type II keratins. Interacts with NOD2. As to expression, expressed in the basal cell layers of several stratified epithelia including esophagus, tongue, stomach, epidermis and hair follicle. In the hair follicle, expression is detected mainly in the basal layer of the outer root sheath (ORS), except just above the follicle bulb where it occurs throughout its thickness. Low expression levels are seen in the single layer of ORS cells around the base of the follicle which increases in the palisade-like cells of the bulb. Also expressed in the basal cells of the sebaceous glands, and expression in the epidermis occurs in a punctate pattern.

The sequence is that of Keratin, type I cytoskeletal 15 from Ovis aries (Sheep).